A 128-amino-acid polypeptide reads, in one-letter code: MYQVMLVALGGAIGSAARFTLSGLVLRYSLDWRFPLPTFTVNIIGCLVIGMLAGLASKEGFISPDMRVLLFTGLVGGFTTFSAFGLETLVLLREGLVGIAAAYIVSSIVVGLVLMWLGFELVKMTMQA.

Transmembrane regions (helical) follow at residues 6-26, 36-56, 68-88, and 99-119; these read LVAL…GLVL, LPTF…AGLA, VLLF…GLET, and IAAA…WLGF. The Na(+) site is built by glycine 76 and threonine 79.

The protein belongs to the fluoride channel Fluc/FEX (TC 1.A.43) family.

The protein localises to the cell inner membrane. It carries out the reaction fluoride(in) = fluoride(out). With respect to regulation, na(+) is not transported, but it plays an essential structural role and its presence is essential for fluoride channel function. Fluoride-specific ion channel. Important for reducing fluoride concentration in the cell, thus reducing its toxicity. This Methylobacillus flagellatus (strain ATCC 51484 / DSM 6875 / VKM B-1610 / KT) protein is Fluoride-specific ion channel FluC.